A 549-amino-acid polypeptide reads, in one-letter code: Probable protein kinase UbiB (549 aa).

The Protein kinase domain occupies 123–501 (DFDDIPLASA…QQKAHKSNYL (379 aa)). ATP is bound by residues 129–137 (LASASISQV) and lysine 152. Aspartate 287 (proton acceptor) is an active-site residue. A run of 2 helical transmembrane segments spans residues 498–518 (SNYL…LINQ) and 520–540 (ATLW…VLGW).

It belongs to the ABC1 family. UbiB subfamily.

The protein resides in the cell inner membrane. It functions in the pathway cofactor biosynthesis; ubiquinone biosynthesis [regulation]. In terms of biological role, is probably a protein kinase regulator of UbiI activity which is involved in aerobic coenzyme Q (ubiquinone) biosynthesis. The protein is Probable protein kinase UbiB of Shewanella halifaxensis (strain HAW-EB4).